Here is a 388-residue protein sequence, read N- to C-terminus: Succinate--CoA ligase [ADP-forming] subunit beta (388 aa).

Residues 9 to 244 (KQIFAEYQLP…PSQEDPREAL (236 aa)) form the ATP-grasp domain. Residues lysine 46, 53 to 55 (GRG), glutamate 99, serine 102, and glutamate 107 contribute to the ATP site. Mg(2+) contacts are provided by asparagine 199 and aspartate 213. Residues asparagine 264 and 321–323 (GIV) contribute to the substrate site.

Belongs to the succinate/malate CoA ligase beta subunit family. As to quaternary structure, heterotetramer of two alpha and two beta subunits. It depends on Mg(2+) as a cofactor.

The enzyme catalyses succinate + ATP + CoA = succinyl-CoA + ADP + phosphate. It catalyses the reaction GTP + succinate + CoA = succinyl-CoA + GDP + phosphate. It functions in the pathway carbohydrate metabolism; tricarboxylic acid cycle; succinate from succinyl-CoA (ligase route): step 1/1. Functionally, succinyl-CoA synthetase functions in the citric acid cycle (TCA), coupling the hydrolysis of succinyl-CoA to the synthesis of either ATP or GTP and thus represents the only step of substrate-level phosphorylation in the TCA. The beta subunit provides nucleotide specificity of the enzyme and binds the substrate succinate, while the binding sites for coenzyme A and phosphate are found in the alpha subunit. This chain is Succinate--CoA ligase [ADP-forming] subunit beta, found in Pasteurella multocida (strain Pm70).